Reading from the N-terminus, the 589-residue chain is Splicing factor U2af large subunit B (589 aa).

A disordered region spans residues 1 to 195; sequence MMSYEGNGDG…KRRSGFDMAP (195 aa). Over residues 14–27 the composition is skewed to polar residues; that stretch reads STENHNENYISLES. Composition is skewed to basic and acidic residues over residues 29–100 and 109–145; these read PFHE…DRQR and RDRS…DREV. 2 stretches are compositionally biased toward basic residues: residues 146 to 156 and 164 to 188; these read RHRRRSRSRSR and RSEH…SKRR. 3 RRM domains span residues 255-338, 375-453, and 494-580; these read RRVY…RPTD, DRIF…RAIQ, and QVVT…YPED.

It belongs to the splicing factor SR family. As to quaternary structure, component of the spliceosome. Interacts with SF1 in the nucleus.

The protein localises to the nucleus. The protein resides in the nucleus speckle. Functionally, necessary for the splicing of pre-mRNA. The polypeptide is Splicing factor U2af large subunit B (Arabidopsis thaliana (Mouse-ear cress)).